Here is a 312-residue protein sequence, read N- to C-terminus: MVKHQQTPAYIAAILYSFIIGLSFLFVKIALQTAEPFDILAHRFTIAFAAATVPILFGWVKLSIRVKDVIDILPLALLYPALFFSFQAFGLVYSSSSEAGIIQAAIPIFTMVFAAYVLKERPTWTQKGFTVLSVAGVMFIFVMKGVDVESASLKGSLLILLSALSSAMYNTAARKMTQRFKLTELTYIMSAIGFVVFNAIALVRHGAAGTVGTYFLPFREPGFVLAIVYLGVLSSLVTSFLSNYTLSRIEAFKMSAFNHVSTIVTMIAGFVILNESLAWYHLAGAVCIMIGVVGSNINLEKKTKRPGMPAKK.

A run of 10 helical transmembrane segments spans residues 11–31 (IAAILYSFIIGLSFLFVKIAL), 46–66 (IAFAAATVPILFGWVKLSIRV), 72–92 (ILPLALLYPALFFSFQAFGLV), 98–118 (EAGIIQAAIPIFTMVFAAYVL), 128–148 (GFTVLSVAGVMFIFVMKGVDV), 155–171 (GSLLILLSALSSAMYNT), 183–203 (TELTYIMSAIGFVVFNAIALV), 221–241 (PGFVLAIVYLGVLSSLVTSFL), 254–274 (MSAFNHVSTIVTMIAGFVILN), and 277–297 (LAWYHLAGAVCIMIGVVGSNI). EamA domains follow at residues 18-142 (FIIG…FIFV) and 164-297 (LSSA…GSNI).

Belongs to the EamA transporter family.

The protein localises to the cell membrane. This is an uncharacterized protein from Bacillus subtilis (strain 168).